We begin with the raw amino-acid sequence, 157 residues long: Dihydrofolate reductase type 15 (157 aa).

Positions 2–156 (KLSLMAAISK…INYSYQIWQK (155 aa)) constitute a DHFR domain.

Belongs to the dihydrofolate reductase family. Homodimer.

The catalysed reaction is (6S)-5,6,7,8-tetrahydrofolate + NADP(+) = 7,8-dihydrofolate + NADPH + H(+). It participates in cofactor biosynthesis; tetrahydrofolate biosynthesis; 5,6,7,8-tetrahydrofolate from 7,8-dihydrofolate: step 1/1. Its function is as follows. Key enzyme in folate metabolism. Catalyzes an essential reaction for de novo glycine and purine synthesis, and for DNA precursor synthesis. The sequence is that of Dihydrofolate reductase type 15 (dhfrXV) from Escherichia coli.